The following is a 316-amino-acid chain: NAC domain-containing protein 22 (316 aa).

The NAC domain occupies 17–170; that stretch reads DLPGFRFHPT…DMVLCKIYRK (154 aa). The DNA-binding element occupies 117-176; the sequence is IGLKKTLVFYQGRAPRGTKTDWVMNEYRLPDYGAARAAAPPPKEDMVLCKIYRKATPLKE. The segment at 229–260 is disordered; sequence QSSSSSAAPSGSSSKNGGAGAPREAKKEEADV. Low complexity predominate over residues 230–244; that stretch reads SSSSSAAPSGSSSKN.

It is found in the nucleus. Functionally, transcription activator that binds sequence-specific DNA motifs. Involved in stress response. Plays a positive role in drought and salt stress tolerance through the modulation of abscisic acid-mediated signaling. This Oryza sativa subsp. japonica (Rice) protein is NAC domain-containing protein 22.